Here is a 920-residue protein sequence, read N- to C-terminus: DNA ligase (920 aa).

NAD(+)-binding positions include 90 to 94 (DAAYD), 139 to 140 (SL), and Glu173. The active-site N6-AMP-lysine intermediate is Lys175. 4 residues coordinate NAD(+): Arg196, Glu235, Lys360, and Lys384. 4 residues coordinate Zn(2+): Cys481, Cys484, Cys500, and Cys506. Residues 662-691 (GEAAIESAETQGDTASETTGAPTGAEAPLG) are disordered. The segment covering 669-682 (AETQGDTASETTGA) has biased composition (polar residues). The 82-residue stretch at 839 to 920 (SLPQTLAGKT…FAQLLATGTI (82 aa)) folds into the BRCT domain.

This sequence belongs to the NAD-dependent DNA ligase family. LigA subfamily. Mg(2+) is required as a cofactor. The cofactor is Mn(2+).

The enzyme catalyses NAD(+) + (deoxyribonucleotide)n-3'-hydroxyl + 5'-phospho-(deoxyribonucleotide)m = (deoxyribonucleotide)n+m + AMP + beta-nicotinamide D-nucleotide.. DNA ligase that catalyzes the formation of phosphodiester linkages between 5'-phosphoryl and 3'-hydroxyl groups in double-stranded DNA using NAD as a coenzyme and as the energy source for the reaction. It is essential for DNA replication and repair of damaged DNA. This is DNA ligase from Bifidobacterium longum (strain DJO10A).